Reading from the N-terminus, the 364-residue chain is 2-oxoadipate dioxygenase/decarboxylase, chloroplastic/amyloplastic (364 aa).

A chloroplast-targeting transit peptide spans 1 to 49 (MAVALAGARSPGAGAILSLRRLAPAAAAPVRLGGSGTPGTRRRRGIAMA). 2-oxoadipate contacts are provided by H107 and R111. H107 provides a ligand contact to Fe(2+). Position 243 (H243) interacts with Fe(2+). Q289 and Y313 together coordinate 2-oxoadipate. Residue E315 participates in Fe(2+) binding.

The protein belongs to the 2-oxoadipate dioxygenase/decarboxylase family. The cofactor is Fe(2+). In terms of tissue distribution, expressed in roots, stems, leaf sheaths, leaf blades, panicles, and endosperm.

The protein resides in the plastid. It is found in the chloroplast. Its subcellular location is the amyloplast. It carries out the reaction 2-oxoadipate + O2 = (R)-2-hydroxyglutarate + CO2. It participates in amino-acid degradation. Catalyzes the decarboxylation and hydroxylation of 2-oxoadipate (2OA) to form D-2-hydroxyglutarate (D-2-HGA). Is involved in a D-lysine catabolic pathway. Involved in the regulation of starch synthesis and amyloplast development within the peripheral endosperm during the grain-filling stage. This is 2-oxoadipate dioxygenase/decarboxylase, chloroplastic/amyloplastic from Oryza sativa subsp. japonica (Rice).